Reading from the N-terminus, the 358-residue chain is Zinc transporter ZIP1 (358 aa).

At 1–7 (MDLLFAK) the chain is on the extracellular side. The chain crosses the membrane as a helical span at residues 8 to 28 (IICIGIFLVVTTFGCFIPHLM). The Cytoplasmic portion of the chain corresponds to 29-53 (GLYKEKENEEKNKRVKNILSNLNCF). A helical transmembrane segment spans residues 54–74 (GSGFIFSIIMFHLLPETIHII). At 75–91 (SDHGNIRIFNTSDSQMK) the chain is on the extracellular side. Residues 92–112 (ILYIFFFVFIGFCMQLGLEYV) form a helical membrane-spanning segment. The Cytoplasmic segment spans residues 113 to 186 (LPVDTNICCV…GKFLEILTLQ (74 aa)). A helical membrane pass occupies residues 187–207 (SFFLTISLAIHSCIEGMIIGT). Residues 208–213 (STDVNY) are Extracellular-facing. Residues 214 to 234 (VFISSFCILLHKWIAGVTVSL) form a helical membrane-spanning segment. Over 235-246 (SLNSNNMNKTLK) the chain is Cytoplasmic. The helical transmembrane segment at 247–267 (AILLLTFVFASPLGIVLGHMA) threads the bilayer. Topologically, residues 268–273 (KSAGQK) are extracellular. Residues 274 to 294 (VTCLINAVSIGTLLFIGCEIL) traverse the membrane as a helical segment. At 295-310 (LNEIKQNISRKVRLCK) the chain is on the cytoplasmic side. The chain crosses the membrane as a helical span at residues 311-331 (WLSFCFSCLIAFALISFTTSM). Residues 332–358 (APHTHGDIDTHVHVHHHDHDHDHGHNH) lie on the Extracellular side of the membrane.

Belongs to the ZIP transporter (TC 2.A.5) family. As to quaternary structure, homodimer.

Its subcellular location is the plastid. The protein resides in the apicoplast. It is found in the cell membrane. It carries out the reaction Zn(2+)(in) = Zn(2+)(out). The enzyme catalyses Fe(2+)(in) = Fe(2+)(out). Functionally, transporter for the divalent zinc cation. Mediates the influx of zinc into cells from extracellular space. Can transport divalent iron ions. Does not transport manganese and cadmium cations. In Plasmodium falciparum (isolate 3D7), this protein is Zinc transporter ZIP1.